The following is a 1377-amino-acid chain: DNA-directed RNA polymerase subunit beta' (1377 aa).

Positions 60, 62, 75, and 78 each coordinate Zn(2+). Positions 449, 451, and 453 each coordinate Mg(2+). Positions 777, 851, 858, and 861 each coordinate Zn(2+).

The protein belongs to the RNA polymerase beta' chain family. The RNAP catalytic core consists of 2 alpha, 1 beta, 1 beta' and 1 omega subunit. When a sigma factor is associated with the core the holoenzyme is formed, which can initiate transcription. Requires Mg(2+) as cofactor. It depends on Zn(2+) as a cofactor.

It catalyses the reaction RNA(n) + a ribonucleoside 5'-triphosphate = RNA(n+1) + diphosphate. Its function is as follows. DNA-dependent RNA polymerase catalyzes the transcription of DNA into RNA using the four ribonucleoside triphosphates as substrates. This is DNA-directed RNA polymerase subunit beta' from Borrelia hermsii (strain HS1 / DAH).